The primary structure comprises 467 residues: MSIGNIVQCIGAVVDIEFPRNAMPKVYDALVLEDSSETSFAEKGLTFEVQQQLGDGVVRTIALGSSDGLRRGMAVKNTEAPISVPVGQGTLGRIMDVLGRPIDEAGPIASDERRAIHQKAPKFDELSPSTDLLETGIKVIDLICPFAKGGKVGLFGGAGVGKTVNMMELINNIAKQHSGLSVFAGVGERTREGNDFYHEMKDSNVLDKVAMVFGQMNEPPGNRLRVALSGLTMAEKFRDEGRDILFFVDNIYRYTLAGTEVSALLGRMPSAVGYQPTLAEEMGKLQERITSTKTGSITSIQAVYVPADDLTDPSPATTFLHLDSTLVLSRDIAALGIYPAVDPLDSTSRQMDPQVVGQEHYNVARAVQQTLQRYKELRDIIAILGMDELSPEDKMAVNRARKIQRFLSQPFHVAEVFTGSPGKYVPLKETIRGFKMLVDGECDHLPEQAFYMVGSIDEAFEKAKKLQ.

156–163 (GGAGVGKT) provides a ligand contact to ATP.

This sequence belongs to the ATPase alpha/beta chains family. In terms of assembly, F-type ATPases have 2 components, CF(1) - the catalytic core - and CF(0) - the membrane proton channel. CF(1) has five subunits: alpha(3), beta(3), gamma(1), delta(1), epsilon(1). CF(0) has three main subunits: a(1), b(2) and c(9-12). The alpha and beta chains form an alternating ring which encloses part of the gamma chain. CF(1) is attached to CF(0) by a central stalk formed by the gamma and epsilon chains, while a peripheral stalk is formed by the delta and b chains.

The protein localises to the cell inner membrane. It catalyses the reaction ATP + H2O + 4 H(+)(in) = ADP + phosphate + 5 H(+)(out). Produces ATP from ADP in the presence of a proton gradient across the membrane. The catalytic sites are hosted primarily by the beta subunits. This Cupriavidus pinatubonensis (strain JMP 134 / LMG 1197) (Cupriavidus necator (strain JMP 134)) protein is ATP synthase subunit beta.